We begin with the raw amino-acid sequence, 159 residues long: Protein HydD (159 aa).

Belongs to the peptidase A31 family.

The polypeptide is Protein HydD (hydD) (Wolinella succinogenes (strain ATCC 29543 / DSM 1740 / CCUG 13145 / JCM 31913 / LMG 7466 / NCTC 11488 / FDC 602W) (Vibrio succinogenes)).